The sequence spans 361 residues: Chorismate synthase (361 aa).

The NADP(+) site is built by Arg-48 and Arg-54. Residues 125–127 (RSS), 238–239 (NA), Gly-278, 293–297 (KPTSS), and Arg-319 contribute to the FMN site.

This sequence belongs to the chorismate synthase family. Homotetramer. Requires FMNH2 as cofactor.

The catalysed reaction is 5-O-(1-carboxyvinyl)-3-phosphoshikimate = chorismate + phosphate. It participates in metabolic intermediate biosynthesis; chorismate biosynthesis; chorismate from D-erythrose 4-phosphate and phosphoenolpyruvate: step 7/7. Catalyzes the anti-1,4-elimination of the C-3 phosphate and the C-6 proR hydrogen from 5-enolpyruvylshikimate-3-phosphate (EPSP) to yield chorismate, which is the branch point compound that serves as the starting substrate for the three terminal pathways of aromatic amino acid biosynthesis. This reaction introduces a second double bond into the aromatic ring system. This chain is Chorismate synthase, found in Vibrio vulnificus (strain CMCP6).